The chain runs to 110 residues: MRALKMNSISVSVTHGLIFSILLFVISVAGIIINRRNILILLMSIELMLLAVNTNFLIFANMHQQAMGGVFVFFIMAVAAAETAIGLAIVVAIFRKRKTIDLSKLNTLRG.

Transmembrane regions (helical) follow at residues 13–33, 38–58, and 70–90; these read VTHGLIFSILLFVISVAGIII, ILILLMSIELMLLAVNTNFLI, and VFVFFIMAVAAAETAIGLAIV.

Belongs to the complex I subunit 4L family. As to quaternary structure, NDH-1 is composed of 14 different subunits. Subunits NuoA, H, J, K, L, M, N constitute the membrane sector of the complex.

The protein resides in the cell inner membrane. It catalyses the reaction a quinone + NADH + 5 H(+)(in) = a quinol + NAD(+) + 4 H(+)(out). NDH-1 shuttles electrons from NADH, via FMN and iron-sulfur (Fe-S) centers, to quinones in the respiratory chain. The immediate electron acceptor for the enzyme in this species is believed to be ubiquinone. Couples the redox reaction to proton translocation (for every two electrons transferred, four hydrogen ions are translocated across the cytoplasmic membrane), and thus conserves the redox energy in a proton gradient. The protein is NADH-quinone oxidoreductase subunit K of Francisella tularensis subsp. holarctica (strain FTNF002-00 / FTA).